The sequence spans 99 residues: DNA-directed RNA polymerase subunit omega (99 aa).

Belongs to the RNA polymerase subunit omega family. In terms of assembly, the RNAP catalytic core consists of 2 alpha, 1 beta, 1 beta' and 1 omega subunit. When a sigma factor is associated with the core the holoenzyme is formed, which can initiate transcription.

It catalyses the reaction RNA(n) + a ribonucleoside 5'-triphosphate = RNA(n+1) + diphosphate. Promotes RNA polymerase assembly. Latches the N- and C-terminal regions of the beta' subunit thereby facilitating its interaction with the beta and alpha subunits. The sequence is that of DNA-directed RNA polymerase subunit omega from Deinococcus geothermalis (strain DSM 11300 / CIP 105573 / AG-3a).